We begin with the raw amino-acid sequence, 113 residues long: Transcriptional regulator RamA (113 aa).

The 99-residue stretch at 9-107 (DTIVEWIDDN…NLPPGAYRKE (99 aa)) folds into the HTH araC/xylS-type domain. 2 consecutive DNA-binding regions (H-T-H motif) follow at residues 26-47 (DDIA…MQYK) and 74-97 (VYDI…TRTF).

Functionally, transcriptional regulator. Binds to regulatory regions of target genes, including efflux pump operon acrAB and outer membrane protein gene tolC. Represses transcription of genes belonging to the flagellar regulon, including flhD, flhB and fliC; probably thereby leading to repression of motility. Represses expression of the flhDC operon in a post-transcriptional manner. Activates expression of acrAB, perhaps thereby conferring multidrug resistance. Involved in indole- and bile-mediated regulation of acrAB; binding of bile to RamA may contribute to activation of expression of acrAB. Plays a role in regulating virulence in mice. In Salmonella typhimurium (strain LT2 / SGSC1412 / ATCC 700720), this protein is Transcriptional regulator RamA.